A 322-amino-acid polypeptide reads, in one-letter code: Undecaprenyl-phosphate 4-deoxy-4-formamido-L-arabinose transferase (322 aa).

The Cytoplasmic portion of the chain corresponds to 1-235; it reads MFEIHPVKKV…TCLTTTPLRM (235 aa). The chain crosses the membrane as a helical span at residues 236 to 256; sequence LSLLGSIIAIGGFSIAVLLVI. Residues 257–269 are Periplasmic-facing; sequence LRLTFGPQWAAEG. A helical membrane pass occupies residues 270-290; sequence VFMLFAVLFTFIGAQFIGMGL. At 291 to 322 the chain is on the cytoplasmic side; it reads LGEYIGRIYTDVRARPRYFVQQVIRPSSKENE.

The protein belongs to the glycosyltransferase 2 family.

The protein localises to the cell inner membrane. It carries out the reaction UDP-4-deoxy-4-formamido-beta-L-arabinose + di-trans,octa-cis-undecaprenyl phosphate = 4-deoxy-4-formamido-alpha-L-arabinopyranosyl di-trans,octa-cis-undecaprenyl phosphate + UDP. The protein operates within glycolipid biosynthesis; 4-amino-4-deoxy-alpha-L-arabinose undecaprenyl phosphate biosynthesis; 4-amino-4-deoxy-alpha-L-arabinose undecaprenyl phosphate from UDP-4-deoxy-4-formamido-beta-L-arabinose and undecaprenyl phosphate: step 1/2. Its pathway is bacterial outer membrane biogenesis; lipopolysaccharide biosynthesis. Functionally, catalyzes the transfer of 4-deoxy-4-formamido-L-arabinose from UDP to undecaprenyl phosphate. The modified arabinose is attached to lipid A and is required for resistance to polymyxin and cationic antimicrobial peptides. In Shigella flexneri, this protein is Undecaprenyl-phosphate 4-deoxy-4-formamido-L-arabinose transferase.